The chain runs to 54 residues: Putative neurotoxin-I (54 aa).

Intrachain disulfides connect Cys20–Cys42, Cys28–Cys51, and Cys32–Cys53.

In terms of tissue distribution, expressed by the venom gland.

Its subcellular location is the secreted. In Lychas mucronatus (Chinese swimming scorpion), this protein is Putative neurotoxin-I.